Consider the following 503-residue polypeptide: Cytochrome P450 11B1, mitochondrial (503 aa).

A mitochondrion-targeting transit peptide spans 1 to 24 (MALRAKAEVCMAVPWLSLQRAQAL). Residue Cys450 participates in heme binding.

Belongs to the cytochrome P450 family. Requires heme as cofactor. In terms of tissue distribution, expressed in the zona fasciculata/reticularis of the adrenal cortex.

It localises to the mitochondrion inner membrane. The catalysed reaction is a steroid + 2 reduced [adrenodoxin] + O2 + 2 H(+) = an 11beta-hydroxysteroid + 2 oxidized [adrenodoxin] + H2O. The enzyme catalyses 11-deoxycortisol + 2 reduced [adrenodoxin] + O2 + 2 H(+) = cortisol + 2 oxidized [adrenodoxin] + H2O. It catalyses the reaction 21-hydroxyprogesterone + 2 reduced [adrenodoxin] + O2 + 2 H(+) = corticosterone + 2 oxidized [adrenodoxin] + H2O. The protein operates within steroid biosynthesis; glucocorticoid biosynthesis. It participates in steroid hormone biosynthesis. Its function is as follows. A cytochrome P450 monooxygenase involved in the biosynthesis of adrenal corticoids. Catalyzes a variety of reactions that are essential for many species, including detoxification, defense, and the formation of endogenous chemicals like steroid hormones. Steroid 11beta, 18- and 19-hydroxylase with preferred regioselectivity at 11beta, then 18, and lastly 19. Catalyzes the hydroxylation of 11-deoxycortisol and 11-deoxycorticosterone (21-hydroxyprogesterone) at 11beta position, yielding cortisol or corticosterone, respectively, but cannot produce aldosterone. Mechanistically, uses molecular oxygen inserting one oxygen atom into a substrate for hydroxylation and reducing the second into a water molecule. Two electrons are provided by NADPH via a two-protein mitochondrial transfer system comprising flavoprotein FDXR (adrenodoxin/ferredoxin reductase) and nonheme iron-sulfur protein FDX1 or FDX2 (adrenodoxin/ferredoxin). Due to its lack of 18-oxidation activity, it is incapable of generating aldosterone. Could also be involved in the androgen metabolic pathway. This chain is Cytochrome P450 11B1, mitochondrial, found in Homo sapiens (Human).